The primary structure comprises 259 residues: 3-deoxy-manno-octulosonate cytidylyltransferase (259 aa).

It belongs to the KdsB family.

It is found in the cytoplasm. The enzyme catalyses 3-deoxy-alpha-D-manno-oct-2-ulosonate + CTP = CMP-3-deoxy-beta-D-manno-octulosonate + diphosphate. It functions in the pathway nucleotide-sugar biosynthesis; CMP-3-deoxy-D-manno-octulosonate biosynthesis; CMP-3-deoxy-D-manno-octulosonate from 3-deoxy-D-manno-octulosonate and CTP: step 1/1. It participates in bacterial outer membrane biogenesis; lipopolysaccharide biosynthesis. In terms of biological role, activates KDO (a required 8-carbon sugar) for incorporation into bacterial lipopolysaccharide in Gram-negative bacteria. The sequence is that of 3-deoxy-manno-octulosonate cytidylyltransferase from Protochlamydia amoebophila (strain UWE25).